Reading from the N-terminus, the 127-residue chain is uncharacterized protein (127 aa).

2 disordered regions span residues 1 to 22 (MLPA…KMKG) and 53 to 106 (LVGK…PGPK). A compositionally biased stretch (basic and acidic residues) spans 76-95 (PNGEAHAEQARRKISVEEKQ).

It localises to the mitochondrion. This is an uncharacterized protein from Arabidopsis thaliana (Mouse-ear cress).